Here is a 393-residue protein sequence, read N- to C-terminus: Formate-dependent phosphoribosylglycinamide formyltransferase (393 aa).

Residues 22–23 (EL) and glutamate 82 contribute to the N(1)-(5-phospho-beta-D-ribosyl)glycinamide site. ATP is bound by residues arginine 114, lysine 155, 160-165 (SSGKGQ), 195-198 (EGLV), and glutamate 203. In terms of domain architecture, ATP-grasp spans 119–308 (LLAAETLQLP…EFALHVRAFL (190 aa)). Mg(2+) is bound by residues glutamate 267 and glutamate 279. Residues aspartate 286, lysine 355, and 362-363 (RR) contribute to the N(1)-(5-phospho-beta-D-ribosyl)glycinamide site.

It belongs to the PurK/PurT family. Homodimer.

It carries out the reaction N(1)-(5-phospho-beta-D-ribosyl)glycinamide + formate + ATP = N(2)-formyl-N(1)-(5-phospho-beta-D-ribosyl)glycinamide + ADP + phosphate + H(+). Its pathway is purine metabolism; IMP biosynthesis via de novo pathway; N(2)-formyl-N(1)-(5-phospho-D-ribosyl)glycinamide from N(1)-(5-phospho-D-ribosyl)glycinamide (formate route): step 1/1. Involved in the de novo purine biosynthesis. Catalyzes the transfer of formate to 5-phospho-ribosyl-glycinamide (GAR), producing 5-phospho-ribosyl-N-formylglycinamide (FGAR). Formate is provided by PurU via hydrolysis of 10-formyl-tetrahydrofolate. This chain is Formate-dependent phosphoribosylglycinamide formyltransferase, found in Yersinia enterocolitica serotype O:8 / biotype 1B (strain NCTC 13174 / 8081).